Consider the following 987-residue polypeptide: Mediator of RNA polymerase II transcription subunit 24 (987 aa).

6 short sequence motifs (LXXLL motif) span residues 128 to 132, 344 to 348, 446 to 450, 555 to 559, 786 to 790, and 855 to 859; these read LHWLL, LTPLL, LDLLL, LVALL, LPGLL, and LMRLL. Serine 860 and serine 871 each carry phosphoserine.

It belongs to the Mediator complex subunit 24 family. As to quaternary structure, component of the Mediator complex, which is composed of MED1, MED4, MED6, MED7, MED8, MED9, MED10, MED11, MED12, MED13, MED13L, MED14, MED15, MED16, MED17, MED18, MED19, MED20, MED21, MED22, MED23, MED24, MED25, MED26, MED27, MED29, MED30, MED31, CCNC, CDK8 and CDC2L6/CDK11. The MED12, MED13, CCNC and CDK8 subunits form a distinct module termed the CDK8 module. Mediator containing the CDK8 module is less active than Mediator lacking this module in supporting transcriptional activation. Individual preparations of the Mediator complex lacking one or more distinct subunits have been variously termed ARC, CRSP, DRIP, PC2, SMCC and TRAP. Interacts with AR. Interacts with MED1 and MED10. In terms of tissue distribution, expressed in the adrenal gland, brain, epididymis, heart, kidney, liver, ovary, pancreas, prostate, skeletal muscle, small intestine, spleen, stomach, testis and thymus.

The protein resides in the nucleus. In terms of biological role, component of the Mediator complex, a coactivator involved in the regulated transcription of nearly all RNA polymerase II-dependent genes. Mediator functions as a bridge to convey information from gene-specific regulatory proteins to the basal RNA polymerase II transcription machinery. Mediator is recruited to promoters by direct interactions with regulatory proteins and serves as a scaffold for the assembly of a functional preinitiation complex with RNA polymerase II and the general transcription factors. Required for basal and activator-dependent transcription. This is Mediator of RNA polymerase II transcription subunit 24 (Med24) from Mus musculus (Mouse).